The primary structure comprises 384 residues: Dehydrogenase ALT3 (384 aa).

Belongs to the iron-containing alcohol dehydrogenase family. Requires Fe cation as cofactor.

It participates in mycotoxin biosynthesis. In terms of biological role, dehydrogenase; part of the gene cluster that mediates the biosynthesis of the host-selective toxins (HSTs) AAL-toxins, sphinganine-analog mycotoxins responsible for Alternaria stem canker on tomato by the tomato pathotype. The biosynthesis starts with the polyketide synthase ALT1-catalyzed C-16 carbon chain assembly from one starter acetyl-CoA unit with malonyl-CoA extender units. ALT1 also selectively transfers methyl groups at the first and the third cycle of chain elongation for AAL toxin. The C-16 polyketide chain is released from the enzyme by a nucleophilic attack of a carbanion, which is derived from R-carbon of glycin by decarboxylation, on the carbonyl carbon of polyketide acyl chain. This step is probably catalyzed by a pyridoxal 5'-phosphate-dependent aminoacyl transferase ALT4. The respective functions of the other enzymes encoded by the cluster have still to be elucidated. The sphingosine N-acyltransferase-like protein ALT7 seems not to act as a resistance/self-tolerance factor against the toxin in the toxin biosynthetic gene cluster, contrary to what is expected. The sequence is that of Dehydrogenase ALT3 from Alternaria alternata (Alternaria rot fungus).